Here is a 423-residue protein sequence, read N- to C-terminus: UDP-N-acetylglucosamine 1-carboxyvinyltransferase 1 (423 aa).

23–24 contributes to the phosphoenolpyruvate binding site; sequence KN. Arginine 96 provides a ligand contact to UDP-N-acetyl-alpha-D-glucosamine. Catalysis depends on cysteine 120, which acts as the Proton donor. Residue cysteine 120 is modified to 2-(S-cysteinyl)pyruvic acid O-phosphothioketal. 2 residues coordinate UDP-N-acetyl-alpha-D-glucosamine: aspartate 309 and valine 331.

The protein belongs to the EPSP synthase family. MurA subfamily.

Its subcellular location is the cytoplasm. The catalysed reaction is phosphoenolpyruvate + UDP-N-acetyl-alpha-D-glucosamine = UDP-N-acetyl-3-O-(1-carboxyvinyl)-alpha-D-glucosamine + phosphate. Its pathway is cell wall biogenesis; peptidoglycan biosynthesis. Functionally, cell wall formation. Adds enolpyruvyl to UDP-N-acetylglucosamine. This Streptococcus pyogenes serotype M1 protein is UDP-N-acetylglucosamine 1-carboxyvinyltransferase 1.